The following is a 272-amino-acid chain: Small ribosomal subunit protein uS2 (272 aa).

A disordered region spans residues Glu-244–Glu-272.

This sequence belongs to the universal ribosomal protein uS2 family.

The sequence is that of Small ribosomal subunit protein uS2 from Trichodesmium erythraeum (strain IMS101).